The sequence spans 453 residues: Proton extrusion protein PxcA (453 aa).

The tract at residues 147 to 189 is disordered; the sequence is SQDKETQTLDNKSTNQTNSKLSNNNKISSGQNDSRLESASQKT. Polar residues predominate over residues 154–163; sequence TLDNKSTNQT. The segment covering 164–175 has biased composition (low complexity); sequence NSKLSNNNKISS. The segment covering 176 to 189 has biased composition (polar residues); it reads GQNDSRLESASQKT. The next 4 membrane-spanning stretches (helical) occupy residues 235–255, 330–350, 377–397, and 413–433; these read FILL…TFLL, SIGN…VIVS, LIIL…WEVI, and FNFL…KYWI.

Belongs to the CemA family.

The protein resides in the cell inner membrane. Its function is as follows. Required for H(+) efflux immediately after light irradiation to form a rapid H(+) concentration gradient across the thylakoid membranes. Together with PxcL, contributes to transient H(+) uptake following dark to light transition. The polypeptide is Proton extrusion protein PxcA (Crocosphaera subtropica (strain ATCC 51142 / BH68) (Cyanothece sp. (strain ATCC 51142))).